We begin with the raw amino-acid sequence, 566 residues long: Phenylalanine--tRNA ligase beta subunit (566 aa).

The B5 domain occupies 287 to 362 (YFQEEVEFNV…IGEGLSSFNP (76 aa)). Residues Asp-340, Asp-346, Glu-349, and Asp-350 each coordinate Mg(2+).

Belongs to the phenylalanyl-tRNA synthetase beta subunit family. Type 2 subfamily. As to quaternary structure, tetramer of two alpha and two beta subunits. The cofactor is Mg(2+).

It is found in the cytoplasm. The catalysed reaction is tRNA(Phe) + L-phenylalanine + ATP = L-phenylalanyl-tRNA(Phe) + AMP + diphosphate + H(+). The sequence is that of Phenylalanine--tRNA ligase beta subunit from Borreliella burgdorferi (strain ZS7) (Borrelia burgdorferi).